The chain runs to 215 residues: Deoxyribose-phosphate aldolase (215 aa).

Residue D90 is the Proton donor/acceptor of the active site. K152 functions as the Schiff-base intermediate with acetaldehyde in the catalytic mechanism. The active-site Proton donor/acceptor is K181.

This sequence belongs to the DeoC/FbaB aldolase family. DeoC type 1 subfamily.

It is found in the cytoplasm. The enzyme catalyses 2-deoxy-D-ribose 5-phosphate = D-glyceraldehyde 3-phosphate + acetaldehyde. It participates in carbohydrate degradation; 2-deoxy-D-ribose 1-phosphate degradation; D-glyceraldehyde 3-phosphate and acetaldehyde from 2-deoxy-alpha-D-ribose 1-phosphate: step 2/2. Functionally, catalyzes a reversible aldol reaction between acetaldehyde and D-glyceraldehyde 3-phosphate to generate 2-deoxy-D-ribose 5-phosphate. This chain is Deoxyribose-phosphate aldolase, found in Ureaplasma parvum serovar 3 (strain ATCC 27815 / 27 / NCTC 11736).